A 338-amino-acid polypeptide reads, in one-letter code: Ketol-acid reductoisomerase (NADP(+)) (338 aa).

The KARI N-terminal Rossmann domain maps to 1-181 (MQIFYDKDCD…GGGRTGIIET (181 aa)). Residues 24 to 27 (YGSQ), Arg47, Ser50, Ser52, and 82 to 85 (DEFQ) each bind NADP(+). His107 is an active-site residue. Gly133 is a binding site for NADP(+). In terms of domain architecture, KARI C-terminal knotted spans 182 to 327 (SFREETETDL…SKLRAMMPWI (146 aa)). Mg(2+) is bound by residues Asp190, Glu194, Glu226, and Glu230. Ser251 provides a ligand contact to substrate.

It belongs to the ketol-acid reductoisomerase family. Mg(2+) is required as a cofactor.

It carries out the reaction (2R)-2,3-dihydroxy-3-methylbutanoate + NADP(+) = (2S)-2-acetolactate + NADPH + H(+). The enzyme catalyses (2R,3R)-2,3-dihydroxy-3-methylpentanoate + NADP(+) = (S)-2-ethyl-2-hydroxy-3-oxobutanoate + NADPH + H(+). It functions in the pathway amino-acid biosynthesis; L-isoleucine biosynthesis; L-isoleucine from 2-oxobutanoate: step 2/4. It participates in amino-acid biosynthesis; L-valine biosynthesis; L-valine from pyruvate: step 2/4. Involved in the biosynthesis of branched-chain amino acids (BCAA). Catalyzes an alkyl-migration followed by a ketol-acid reduction of (S)-2-acetolactate (S2AL) to yield (R)-2,3-dihydroxy-isovalerate. In the isomerase reaction, S2AL is rearranged via a Mg-dependent methyl migration to produce 3-hydroxy-3-methyl-2-ketobutyrate (HMKB). In the reductase reaction, this 2-ketoacid undergoes a metal-dependent reduction by NADPH to yield (R)-2,3-dihydroxy-isovalerate. This is Ketol-acid reductoisomerase (NADP(+)) from Acinetobacter baylyi (strain ATCC 33305 / BD413 / ADP1).